Reading from the N-terminus, the 553-residue chain is Ubiquitin carboxyl-terminal hydrolase 17-like protein 15 (553 aa).

The USP domain occupies 80-375 (AGLQNMGNTC…QAYVLFYIQK (296 aa)). Cysteine 89 acts as the Nucleophile in catalysis. Histidine 334 serves as the catalytic Proton acceptor. 2 stretches are compositionally biased toward basic and acidic residues: residues 382–392 (SESVSRGREPR) and 398–413 (DTDRRATQGELKRDHP). Disordered regions lie at residues 382 to 413 (SESVSRGREPRALGAEDTDRRATQGELKRDHP) and 491 to 524 (STTPTHQESMNTGTLASLRGRARRSKGKNKHSKR). A compositionally biased stretch (polar residues) spans 496–505 (HQESMNTGTL). Basic residues predominate over residues 510-524 (GRARRSKGKNKHSKR).

This sequence belongs to the peptidase C19 family. USP17 subfamily.

Its subcellular location is the nucleus. It localises to the endoplasmic reticulum. It catalyses the reaction Thiol-dependent hydrolysis of ester, thioester, amide, peptide and isopeptide bonds formed by the C-terminal Gly of ubiquitin (a 76-residue protein attached to proteins as an intracellular targeting signal).. Functionally, deubiquitinating enzyme that removes conjugated ubiquitin from specific proteins to regulate different cellular processes that may include cell proliferation, progression through the cell cycle, apoptosis, cell migration, and the cellular response to viral infection. This chain is Ubiquitin carboxyl-terminal hydrolase 17-like protein 15 (USP17L15), found in Homo sapiens (Human).